We begin with the raw amino-acid sequence, 219 residues long: Ribose-5-phosphate isomerase A (219 aa).

Residues 28-31, 81-84, and 94-97 contribute to the substrate site; these read SGST, DGAD, and KGGG. Residue E103 is the Proton acceptor of the active site. Position 121 (K121) interacts with substrate.

The protein belongs to the ribose 5-phosphate isomerase family. Homodimer.

The enzyme catalyses aldehydo-D-ribose 5-phosphate = D-ribulose 5-phosphate. The protein operates within carbohydrate degradation; pentose phosphate pathway; D-ribose 5-phosphate from D-ribulose 5-phosphate (non-oxidative stage): step 1/1. Catalyzes the reversible conversion of ribose-5-phosphate to ribulose 5-phosphate. The polypeptide is Ribose-5-phosphate isomerase A (Mannheimia succiniciproducens (strain KCTC 0769BP / MBEL55E)).